Consider the following 560-residue polypeptide: DNA ligase B (560 aa).

Residue Lys-124 is the N6-AMP-lysine intermediate of the active site.

This sequence belongs to the NAD-dependent DNA ligase family. LigB subfamily.

The enzyme catalyses NAD(+) + (deoxyribonucleotide)n-3'-hydroxyl + 5'-phospho-(deoxyribonucleotide)m = (deoxyribonucleotide)n+m + AMP + beta-nicotinamide D-nucleotide.. In terms of biological role, catalyzes the formation of phosphodiester linkages between 5'-phosphoryl and 3'-hydroxyl groups in double-stranded DNA using NAD as a coenzyme and as the energy source for the reaction. In Escherichia coli O6:K15:H31 (strain 536 / UPEC), this protein is DNA ligase B.